Reading from the N-terminus, the 83-residue chain is Large ribosomal subunit protein eL37 (83 aa).

4 residues coordinate Zn(2+): cysteine 19, cysteine 22, cysteine 34, and cysteine 37. The segment at 19-37 adopts a C4-type zinc-finger fold; sequence CRRCGRNSYHVQWERCAAC.

Belongs to the eukaryotic ribosomal protein eL37 family. Requires Zn(2+) as cofactor.

Binds to the 23S rRNA. This is Large ribosomal subunit protein eL37 (RPL37) from Leishmania donovani.